Consider the following 227-residue polypeptide: MEALKKIAGVTAAQYVTDGMTIGLGTGSTAYYFVEEIGRRIKEEGLQVVGVTTSSVTTKQAEGLGIPLTSIDDIDCIDLTVDGADEVDKAFNGIKGGGAALLMEKIVATPTKEYIWVVDESKLVDHLGAFKLPVEVVQYGADRLFRVFERAGYKPSFRMKGDKRLITDMQNFIIDLNLGCIENPCEFGRLLDQTVGVVEHGLFNGMVDKVIVAGQAGVTVLEANQST.

Substrate-binding positions include 26–29, 82–85, and 95–98; these read TGST, DGAD, and KGGG. Glu104 (proton acceptor) is an active-site residue. Lys122 is a substrate binding site.

It belongs to the ribose 5-phosphate isomerase family. In terms of assembly, homodimer.

It carries out the reaction aldehydo-D-ribose 5-phosphate = D-ribulose 5-phosphate. It participates in carbohydrate degradation; pentose phosphate pathway; D-ribose 5-phosphate from D-ribulose 5-phosphate (non-oxidative stage): step 1/1. Its function is as follows. Catalyzes the reversible conversion of ribose-5-phosphate to ribulose 5-phosphate. The polypeptide is Ribose-5-phosphate isomerase A (Streptococcus equi subsp. equi (strain 4047)).